The primary structure comprises 54 residues: UPF0391 membrane protein PFL_0093 (54 aa).

Helical transmembrane passes span 4 to 24 (WAITFLIIAIVAAVLGFGGIA) and 29 to 49 (GIAKILFVVFLVMFIASFFFG).

The protein belongs to the UPF0391 family.

The protein resides in the cell membrane. The sequence is that of UPF0391 membrane protein PFL_0093 from Pseudomonas fluorescens (strain ATCC BAA-477 / NRRL B-23932 / Pf-5).